A 143-amino-acid chain; its full sequence is Interferon gamma (143 aa).

Position 1 is a pyrrolidone carboxylic acid (glutamine 1). Asparagine 25 and asparagine 97 each carry an N-linked (GlcNAc...) asparagine glycan.

Belongs to the type II (or gamma) interferon family. Homodimer. Interacts with IFNGR1 (via extracellular domain); this interaction promotes IFNGR1 dimerization.

It localises to the secreted. Functionally, type II interferon produced by immune cells such as T-cells and NK cells that plays crucial roles in antimicrobial, antiviral, and antitumor responses by activating effector immune cells and enhancing antigen presentation. Primarily signals through the JAK-STAT pathway after interaction with its receptor IFNGR1 to affect gene regulation. Upon IFNG binding, IFNGR1 intracellular domain opens out to allow association of downstream signaling components JAK2, JAK1 and STAT1, leading to STAT1 activation, nuclear translocation and transcription of IFNG-regulated genes. Many of the induced genes are transcription factors such as IRF1 that are able to further drive regulation of a next wave of transcription. Plays a role in class I antigen presentation pathway by inducing a replacement of catalytic proteasome subunits with immunoproteasome subunits. In turn, increases the quantity, quality, and repertoire of peptides for class I MHC loading. Increases the efficiency of peptide generation also by inducing the expression of activator PA28 that associates with the proteasome and alters its proteolytic cleavage preference. Up-regulates as well MHC II complexes on the cell surface by promoting expression of several key molecules such as cathepsins B/CTSB, H/CTSH, and L/CTSL. Participates in the regulation of hematopoietic stem cells during development and under homeostatic conditions by affecting their development, quiescence, and differentiation. The chain is Interferon gamma (IFNG) from Pan troglodytes (Chimpanzee).